We begin with the raw amino-acid sequence, 502 residues long: UPF0371 protein CLK_3516 (502 aa).

The protein belongs to the UPF0371 family.

The sequence is that of UPF0371 protein CLK_3516 from Clostridium botulinum (strain Loch Maree / Type A3).